Reading from the N-terminus, the 841-residue chain is Phosphatidylglycerol lysyltransferase (841 aa).

The Cytoplasmic segment spans residues M1–K8. Residues L9 to L29 traverse the membrane as a helical segment. Residues Y30–W52 lie on the Extracellular side of the membrane. Residues L53–I73 form a helical membrane-spanning segment. The Cytoplasmic portion of the chain corresponds to L74–R89. A helical transmembrane segment spans residues I90–S110. The Extracellular segment spans residues V111–T129. The helical transmembrane segment at I130–I150 threads the bilayer. Residues H151–W164 lie on the Cytoplasmic side of the membrane. The chain crosses the membrane as a helical span at residues V165–I185. The Extracellular portion of the chain corresponds to K186 to R193. Residues L194–M216 form a helical membrane-spanning segment. Topologically, residues S217–T229 are cytoplasmic. Residues F230–F250 traverse the membrane as a helical segment. The Extracellular segment spans residues G251–A270. A helical membrane pass occupies residues I271–L291. The Cytoplasmic portion of the chain corresponds to I292–F336. The chain crosses the membrane as a helical span at residues A337–I357. Residues Y358–Y367 lie on the Extracellular side of the membrane. The chain crosses the membrane as a helical span at residues I368 to I388. The Cytoplasmic segment spans residues G389–K392. The chain crosses the membrane as a helical span at residues L393–A413. The Extracellular segment spans residues Y414 to T415. A helical membrane pass occupies residues Y416–Y436. The Cytoplasmic segment spans residues R437–Y448. A helical transmembrane segment spans residues S449–I469. Over K470 to R489 the chain is Extracellular. Residues Y490–F510 traverse the membrane as a helical segment. Over E511 to N841 the chain is Cytoplasmic.

It belongs to the LPG synthase family.

The protein localises to the cell membrane. The catalysed reaction is L-lysyl-tRNA(Lys) + a 1,2-diacyl-sn-glycero-3-phospho-(1'-sn-glycerol) = a 1,2-diacyl-sn-glycero-3-phospho-1'-(3'-O-L-lysyl)-sn-glycerol + tRNA(Lys). Catalyzes the transfer of a lysyl group from L-lysyl-tRNA(Lys) to membrane-bound phosphatidylglycerol (PG), which produces lysylphosphatidylglycerol (LPG), a major component of the bacterial membrane with a positive net charge. LPG synthesis contributes to bacterial virulence as it is involved in the resistance mechanism against cationic antimicrobial peptides (CAMP) produces by the host's immune system (defensins, cathelicidins) and by the competing microorganisms (bacteriocins). In fact, the modification of anionic phosphatidylglycerol with positively charged L-lysine results in repulsion of the peptides. This Staphylococcus xylosus protein is Phosphatidylglycerol lysyltransferase (mprF).